A 374-amino-acid chain; its full sequence is Chaperone protein DnaJ (374 aa).

The 66-residue stretch at 4–69 (SYYEILEITQ…EKRAIYDRYG (66 aa)) folds into the J domain. The CR-type zinc-finger motif lies at 136 to 213 (GCKKNIDFTY…CKGLGYNESK (78 aa)). Positions 149, 152, 165, 168, 187, 190, 201, and 204 each coordinate Zn(2+). CXXCXGXG motif repeat units lie at residues 149–156 (CKTCNGTG), 165–172 (CPKCQGRG), 187–194 (CPDCQGSG), and 201–208 (CNDCKGLG).

The protein belongs to the DnaJ family. In terms of assembly, homodimer. Zn(2+) is required as a cofactor.

It localises to the cytoplasm. Its function is as follows. Participates actively in the response to hyperosmotic and heat shock by preventing the aggregation of stress-denatured proteins and by disaggregating proteins, also in an autonomous, DnaK-independent fashion. Unfolded proteins bind initially to DnaJ; upon interaction with the DnaJ-bound protein, DnaK hydrolyzes its bound ATP, resulting in the formation of a stable complex. GrpE releases ADP from DnaK; ATP binding to DnaK triggers the release of the substrate protein, thus completing the reaction cycle. Several rounds of ATP-dependent interactions between DnaJ, DnaK and GrpE are required for fully efficient folding. Also involved, together with DnaK and GrpE, in the DNA replication of plasmids through activation of initiation proteins. The polypeptide is Chaperone protein DnaJ (Campylobacter jejuni subsp. doylei (strain ATCC BAA-1458 / RM4099 / 269.97)).